We begin with the raw amino-acid sequence, 329 residues long: DNA-directed RNA polymerase subunit alpha (329 aa).

Residues 1–235 (MQGSVTEFLK…EQLDAFVDLR (235 aa)) are alpha N-terminal domain (alpha-NTD). The alpha C-terminal domain (alpha-CTD) stretch occupies residues 249–329 (FDPILLRPVD…NWPPASIAED (81 aa)).

This sequence belongs to the RNA polymerase alpha chain family. In terms of assembly, homodimer. The RNAP catalytic core consists of 2 alpha, 1 beta, 1 beta' and 1 omega subunit. When a sigma factor is associated with the core the holoenzyme is formed, which can initiate transcription.

It catalyses the reaction RNA(n) + a ribonucleoside 5'-triphosphate = RNA(n+1) + diphosphate. In terms of biological role, DNA-dependent RNA polymerase catalyzes the transcription of DNA into RNA using the four ribonucleoside triphosphates as substrates. The sequence is that of DNA-directed RNA polymerase subunit alpha from Histophilus somni (strain 129Pt) (Haemophilus somnus).